Reading from the N-terminus, the 358-residue chain is Chitin synthase export chaperone (358 aa).

7 helical membrane passes run 49–69 (IIFQGAASVMHIVALVMTVVM), 88–108 (FFYLYMILTFLSLCIDAGVIP), 117–137 (FVAVQAGLASALVTCLVINGF), 159–179 (FVAFVISFLVGLATFKSWAGL), 185–205 (VGIFVVLYFLNALQLLLYVVM), 220–240 (LGDIAFGLFFFIAGQVILYAF), and 250–270 (HYLDGLFFATTCNLLAVMMVY). Residues 321–358 (ASGPGTGSGASASGYEGGHHRRESHGYTPSPNRQSLRY) form a disordered region. The span at 347-358 (YTPSPNRQSLRY) shows a compositional bias: polar residues.

The protein belongs to the CHS7 family. Interacts with chs-3.

The protein localises to the endoplasmic reticulum membrane. In terms of biological role, chaperone required for the export of the chitin synthase chs-3 from the endoplasmic reticulum. This Neurospora crassa (strain ATCC 24698 / 74-OR23-1A / CBS 708.71 / DSM 1257 / FGSC 987) protein is Chitin synthase export chaperone (csc-1).